Consider the following 967-residue polypeptide: RNA polymerase-associated protein RapA (967 aa).

Residues 163-333 (EVGQRHAPRV…FARLRLLDPN (171 aa)) form the Helicase ATP-binding domain. Position 176-183 (176-183 (DEVGLGKT)) interacts with ATP. The DEAH box signature appears at 279-282 (DEAH). Residues 489–643 (RVEWLLNYLT…TCPTGRTIYD (155 aa)) form the Helicase C-terminal domain.

Belongs to the SNF2/RAD54 helicase family. RapA subfamily. Interacts with the RNAP. Has a higher affinity for the core RNAP than for the holoenzyme. Its ATPase activity is stimulated by binding to RNAP.

Functionally, transcription regulator that activates transcription by stimulating RNA polymerase (RNAP) recycling in case of stress conditions such as supercoiled DNA or high salt concentrations. Probably acts by releasing the RNAP, when it is trapped or immobilized on tightly supercoiled DNA. Does not activate transcription on linear DNA. Probably not involved in DNA repair. This is RNA polymerase-associated protein RapA from Pectobacterium carotovorum subsp. carotovorum (strain PC1).